The sequence spans 181 residues: MRSVITGVAGVGKTTVLDIVARESGIPVVNYGTLMFEVAKRRGLVENRDQIRKLSRETQVDLQKLAGEEIGKMENAIVDTHMSIKTPFGYLPGLPEWVLRSINASVFVIIEADPAIIKRRRDNDPTRARDDEGVDSIREHQEMNRYFAAAYSIFSGATVKIVKNEEGKPEQAADEIVRVIK.

7–15 (GVAGVGKTT) lines the ATP pocket.

The protein belongs to the archaeal adenylate kinase family.

It is found in the cytoplasm. The catalysed reaction is AMP + ATP = 2 ADP. The sequence is that of Adenylate kinase (adkA) from Thermoplasma volcanium (strain ATCC 51530 / DSM 4299 / JCM 9571 / NBRC 15438 / GSS1).